We begin with the raw amino-acid sequence, 397 residues long: CCA-adding enzyme (397 aa).

Residues Gly32 and Arg35 each contribute to the ATP site. CTP-binding residues include Gly32 and Arg35. Residues Asp45 and Asp47 each coordinate Mg(2+). Arg116, Asp159, Arg162, Arg165, and Arg168 together coordinate ATP. Residues Arg116, Asp159, Arg162, Arg165, and Arg168 each coordinate CTP.

This sequence belongs to the tRNA nucleotidyltransferase/poly(A) polymerase family. Bacterial CCA-adding enzyme type 3 subfamily. In terms of assembly, homodimer. The cofactor is Mg(2+).

It catalyses the reaction a tRNA precursor + 2 CTP + ATP = a tRNA with a 3' CCA end + 3 diphosphate. It carries out the reaction a tRNA with a 3' CCA end + 2 CTP + ATP = a tRNA with a 3' CCACCA end + 3 diphosphate. Functionally, catalyzes the addition and repair of the essential 3'-terminal CCA sequence in tRNAs without using a nucleic acid template. Adds these three nucleotides in the order of C, C, and A to the tRNA nucleotide-73, using CTP and ATP as substrates and producing inorganic pyrophosphate. tRNA 3'-terminal CCA addition is required both for tRNA processing and repair. Also involved in tRNA surveillance by mediating tandem CCA addition to generate a CCACCA at the 3' terminus of unstable tRNAs. While stable tRNAs receive only 3'-terminal CCA, unstable tRNAs are marked with CCACCA and rapidly degraded. The chain is CCA-adding enzyme from Levilactobacillus brevis (strain ATCC 367 / BCRC 12310 / CIP 105137 / JCM 1170 / LMG 11437 / NCIMB 947 / NCTC 947) (Lactobacillus brevis).